Here is a 641-residue protein sequence, read N- to C-terminus: Probable serine protease FE772_23065 (641 aa).

A helical transmembrane segment spans residues 532-552; it reads WVELIAILAAAGWIRVMLIGL.

It belongs to the peptidase S1 family.

Its subcellular location is the cell inner membrane. Possibly a dedicated protease for substrate gasdermin bGSDM; cleaves the bGSDM precursor, releasing the pore-forming moiety, which integrates into the membrane and triggers cell death. Involved in defense against bacteriophages. When this probable 4 gene operon (bGSDM-FE772_23060-FE772_23065-FE772_23070) is inserted into E.coli it provides nearly 100-fold protection against phages T5 and T6 and about 8-fold against phage T4. The operon without bGSDM no longer protects against phage. The chain is Probable serine protease FE772_23065 from Lysobacter enzymogenes.